Here is a 412-residue protein sequence, read N- to C-terminus: D-xylonate dehydratase (412 aa).

As to quaternary structure, homooctamer.

It carries out the reaction D-xylonate = 2-dehydro-3-deoxy-D-arabinonate + H2O. NADP-dependent D-xylose dehydrogenase involved in the degradation of D-xylose, a major component of hemicelluloses such as xylan. Catalyzes the third reaction in the xylose utilization pathway through dehydratation of D-xylonate into 2-dehydro-3-deoxy-D-xylonate. In Haloferax volcanii (strain ATCC 29605 / DSM 3757 / JCM 8879 / NBRC 14742 / NCIMB 2012 / VKM B-1768 / DS2) (Halobacterium volcanii), this protein is D-xylonate dehydratase.